The chain runs to 220 residues: Putative vesicle-associated membrane protein 726 (220 aa).

Over 1–196 (MGQQSLIYSF…LWFENMKIKL (196 aa)) the chain is Cytoplasmic. One can recognise a Longin domain in the interval 10-114 (FVARGTVILA…SLNKEFGSKL (105 aa)). The 61-residue stretch at 130 to 190 (KLSKVKAQVT…TKMKRKLWFE (61 aa)) folds into the v-SNARE coiled-coil homology domain. The helical; Anchor for type IV membrane protein transmembrane segment at 197–217 (IVFGIIVALILIIILSVCHGF) threads the bilayer. The Vesicular portion of the chain corresponds to 218–220 (KCT).

Belongs to the synaptobrevin family. As to expression, expressed in flowers, leaves, stems and roots.

It localises to the cell membrane. It is found in the early endosome membrane. Its function is as follows. Involved in the targeting and/or fusion of transport vesicles to their target membrane. This chain is Putative vesicle-associated membrane protein 726 (VAMP726), found in Arabidopsis thaliana (Mouse-ear cress).